The sequence spans 694 residues: Elongation factor G (694 aa).

Residues 10-285 form the tr-type G domain; the sequence is EKTRNIGIMA…GVVDYLPSPL (276 aa). GTP contacts are provided by residues 19–26, 83–87, and 137–140; these read AHIDAGKT, DTPGH, and NKMD.

This sequence belongs to the TRAFAC class translation factor GTPase superfamily. Classic translation factor GTPase family. EF-G/EF-2 subfamily.

It is found in the cytoplasm. In terms of biological role, catalyzes the GTP-dependent ribosomal translocation step during translation elongation. During this step, the ribosome changes from the pre-translocational (PRE) to the post-translocational (POST) state as the newly formed A-site-bound peptidyl-tRNA and P-site-bound deacylated tRNA move to the P and E sites, respectively. Catalyzes the coordinated movement of the two tRNA molecules, the mRNA and conformational changes in the ribosome. In Lactobacillus delbrueckii subsp. bulgaricus (strain ATCC 11842 / DSM 20081 / BCRC 10696 / JCM 1002 / NBRC 13953 / NCIMB 11778 / NCTC 12712 / WDCM 00102 / Lb 14), this protein is Elongation factor G.